A 121-amino-acid chain; its full sequence is Two-component response regulator ORR13 (121 aa).

The Response regulatory domain occupies 5–121 (HVLVVDDTHV…ADVPRILNYI (117 aa)). A 4-aspartylphosphate modification is found at aspartate 55.

It belongs to the ARR family. Type-A subfamily. Two-component system major event consists of a His-to-Asp phosphorelay between a sensor histidine kinase (HK) and a response regulator (RR). In plants, the His-to-Asp phosphorelay involves an additional intermediate named Histidine-containing phosphotransfer protein (HPt). This multistep phosphorelay consists of a His-Asp-His-Asp sequential transfer of a phosphate group between first a His and an Asp of the HK protein, followed by the transfer to a conserved His of the HPt protein and finally the transfer to an Asp in the receiver domain of the RR protein. In terms of tissue distribution, expressed in flowers and panicles.

In terms of biological role, functions as a response regulator involved in His-to-Asp phosphorelay signal transduction system. Phosphorylation of the Asp residue in the receiver domain activates the ability of the protein to promote the transcription of target genes. Type-A response regulators seem to act as negative regulators of the cytokinin signaling. This chain is Two-component response regulator ORR13, found in Oryza sativa subsp. japonica (Rice).